A 90-amino-acid polypeptide reads, in one-letter code: Small ribosomal subunit protein uS15 (90 aa).

It belongs to the universal ribosomal protein uS15 family. As to quaternary structure, part of the 30S ribosomal subunit. Forms a bridge to the 50S subunit in the 70S ribosome, contacting the 23S rRNA.

Functionally, one of the primary rRNA binding proteins, it binds directly to 16S rRNA where it helps nucleate assembly of the platform of the 30S subunit by binding and bridging several RNA helices of the 16S rRNA. In terms of biological role, forms an intersubunit bridge (bridge B4) with the 23S rRNA of the 50S subunit in the ribosome. The chain is Small ribosomal subunit protein uS15 from Wolbachia sp. subsp. Drosophila simulans (strain wRi).